Consider the following 355-residue polypeptide: Blue-sensitive opsin P467 (355 aa).

At 1 to 36 the chain is on the extracellular side; the sequence is MNGTEGINFYVPLSNKTGLVRSPFEYPQYYLADPWK. N-linked (GlcNAc...) asparagine glycosylation is found at asparagine 2 and asparagine 15. Residues 37–61 form a helical membrane-spanning segment; it reads FKVLSFYMFFLIAAGMPLNGLTLFV. Topologically, residues 62–73 are cytoplasmic; sequence TFQHKKLRQPLN. The helical transmembrane segment at 74 to 98 threads the bilayer; the sequence is YILVNLAAANLVTVCCGFTVTFYAS. At 99-113 the chain is on the extracellular side; sequence WYAYFVFGPIGCAIE. Cysteine 110 and cysteine 187 are joined by a disulfide. The helical transmembrane segment at 114–133 threads the bilayer; it reads GFFATIGGQVALWSLVVLAI. The Cytoplasmic portion of the chain corresponds to 134-152; sequence ERYIVICKPMGNFRFSATH. A helical transmembrane segment spans residues 153 to 176; it reads AIMGIAFTWFMALACAGPPLFGWS. At 177 to 202 the chain is on the extracellular side; it reads RFIPEGMQCSCGPDYYTLNPDFHNES. Asparagine 200 carries an N-linked (GlcNAc...) asparagine glycan. Residues 203-230 traverse the membrane as a helical segment; it reads YVIYMFIVHFTVPMVVIFFSYGRLVCKV. Topologically, residues 231–252 are cytoplasmic; that stretch reads REAAAQQQESATTQKAEKEVTR. Residues 253-276 traverse the membrane as a helical segment; the sequence is MVILMVLGFLLAWTPYAATAIWIF. Residues 277 to 284 are Extracellular-facing; that stretch reads TNRGAAFS. The chain crosses the membrane as a helical span at residues 285-309; the sequence is VTFMTIPAFFSKSSSIYNPIIYVLL. Lysine 296 carries the post-translational modification N6-(retinylidene)lysine. Residues 310 to 355 lie on the Cytoplasmic side of the membrane; that stretch reads NKQFRNCMVTTICCGKNPFGDEDVSSSVSQSKTEVSSVSSSQVAPA. The tract at residues 333 to 355 is disordered; that stretch reads VSSSVSQSKTEVSSVSSSQVAPA. Residues 334-355 show a composition bias toward low complexity; that stretch reads SSSVSQSKTEVSSVSSSQVAPA.

This sequence belongs to the G-protein coupled receptor 1 family. Opsin subfamily. Phosphorylated on some or all of the serine and threonine residues present in the C-terminal region. In terms of tissue distribution, in this lizard the color pigments are found in the rod-shaped photoreceptor cells which have been derived from ancestral cone-like photoreceptors.

The protein localises to the membrane. Functionally, visual pigments are the light-absorbing molecules that mediate vision. They consist of an apoprotein, opsin, covalently linked to cis-retinal. This chain is Blue-sensitive opsin P467, found in Gekko gecko (Tokay gecko).